The sequence spans 455 residues: MLADNLVEEFEMEDEPWYDHRDLQQDLQLAAELGKTLLDRNTELEDSLQQMYTTNQEQLQEIEYLTKQVELLRQMNEQHAKVYEQLDVTARELEETNQKLVAESKASQQKILSLTETIECLQTNIDHLQSQVEELKSSSQGRGRQKACDQEKPAPSFSCLKELYDLRQHFVYDHVFAEKITSLQSQQSPDEEENEHLKKAVTMLQAQLSLERKKRVSVEAEYKVVLKENSELEQQLGATDAYRARALELEAEVAEMRQMLQAEHPFVNGVEKLVPDSLFVPFKEPSQSLLEEMFLAAPEAPRKPLKRSSSETALSSLAGDDIVKDHEDTCIRRAKAVKQRGISLLHEVDTQYSALKVKYEELLKKCQQEQDSLSHKAVQTSRLLTRDLTGLVTQSEAGASGWEPTPVSPESISSPTTTPPEYKALFKEIFSCIKKTKQEIDEQRTKYPSLSSYSY.

2 coiled-coil regions span residues 37 to 141 and 191 to 264; these read LLDR…SSQG and EEEN…QAEH. The segment covering 132–142 has biased composition (polar residues); it reads VEELKSSSQGR. The segment at 132 to 152 is disordered; the sequence is VEELKSSSQGRGRQKACDQEK. A Phosphoserine modification is found at Ser310. The interval 395–419 is disordered; that stretch reads SEAGASGWEPTPVSPESISSPTTTP. Low complexity predominate over residues 403-419; the sequence is EPTPVSPESISSPTTTP.

This sequence belongs to the CDR2 family. In terms of tissue distribution, expressed in brain and testis (at protein level). Expressed in the cerebellum, cerebral cortex, heart, lung, spleen, ovary, kidney and testis.

The sequence is that of Cerebellar degeneration-related protein 2 (Cdr2) from Mus musculus (Mouse).